Here is a 635-residue protein sequence, read N- to C-terminus: 1-deoxy-D-xylulose-5-phosphate synthase (635 aa).

Residues H78 and 119–121 each bind thiamine diphosphate; that span reads GHA. D150 provides a ligand contact to Mg(2+). Residues 151 to 152, N179, F291, and E376 each bind thiamine diphosphate; that span reads GS. N179 provides a ligand contact to Mg(2+).

It belongs to the transketolase family. DXPS subfamily. As to quaternary structure, homodimer. Requires Mg(2+) as cofactor. Thiamine diphosphate serves as cofactor.

The catalysed reaction is D-glyceraldehyde 3-phosphate + pyruvate + H(+) = 1-deoxy-D-xylulose 5-phosphate + CO2. The protein operates within metabolic intermediate biosynthesis; 1-deoxy-D-xylulose 5-phosphate biosynthesis; 1-deoxy-D-xylulose 5-phosphate from D-glyceraldehyde 3-phosphate and pyruvate: step 1/1. Catalyzes the acyloin condensation reaction between C atoms 2 and 3 of pyruvate and glyceraldehyde 3-phosphate to yield 1-deoxy-D-xylulose-5-phosphate (DXP). The sequence is that of 1-deoxy-D-xylulose-5-phosphate synthase from Chlorobaculum tepidum (strain ATCC 49652 / DSM 12025 / NBRC 103806 / TLS) (Chlorobium tepidum).